Reading from the N-terminus, the 64-residue chain is Large ribosomal subunit protein bL33 (64 aa).

This sequence belongs to the bacterial ribosomal protein bL33 family.

In Synechococcus elongatus (strain ATCC 33912 / PCC 7942 / FACHB-805) (Anacystis nidulans R2), this protein is Large ribosomal subunit protein bL33.